The sequence spans 105 residues: Ribonuclease P protein component 4 (105 aa).

4 residues coordinate Zn(2+): Cys-63, Cys-66, Cys-89, and Cys-92.

The protein belongs to the eukaryotic/archaeal RNase P protein component 4 family. In terms of assembly, consists of a catalytic RNA component and at least 4-5 protein subunits. Requires Zn(2+) as cofactor.

It localises to the cytoplasm. It catalyses the reaction Endonucleolytic cleavage of RNA, removing 5'-extranucleotides from tRNA precursor.. Its function is as follows. Part of ribonuclease P, a protein complex that generates mature tRNA molecules by cleaving their 5'-ends. The chain is Ribonuclease P protein component 4 from Methanoculleus marisnigri (strain ATCC 35101 / DSM 1498 / JR1).